A 126-amino-acid polypeptide reads, in one-letter code: Protein C10 (126 aa).

Ala2 is modified (N-acetylalanine).

The protein belongs to the UPF0456 family. In terms of tissue distribution, ubiquitously expressed, with higher expression in lung.

Its subcellular location is the cytoplasm. Functionally, in brain, may be required for corpus callosum development. The protein is Protein C10 (Grcc10) of Mus musculus (Mouse).